Consider the following 2531-residue polypeptide: Highly reducing polyketide synthase gloL (2531 aa).

The Ketosynthase family 3 (KS3) domain maps to 15-435; that stretch reads YEPLAIVGMG…GANAHVILDS (421 aa). Residues Cys-187, His-322, and His-358 each act as for beta-ketoacyl synthase activity in the active site. The segment at 449–525 is disordered; that stretch reads TNGLSVNGHS…GHSVNGHSKP (77 aa). Residues 453–503 are compositionally biased toward low complexity; the sequence is SVNGHSINGNSVNGHSVNGHSTNGHSINGNSVNGHSVNGNSVNGHSTNGHS. The span at 505 to 521 shows a compositional bias: polar residues; the sequence is NGHSANGNSINGHSVNG. A malonyl-CoA:ACP transacylase (MAT) domain region spans residues 602–909; that stretch reads MVFTGQGAQW…VTALERGKDC (308 aa). The tract at residues 971 to 1099 is N-terminal hotdog fold; the sequence is HEILGSRTVE…GQIRSGTDNP (129 aa). The tract at residues 971-1251 is dehydratase (DH) domain; it reads HEILGSRTVE…GGQFSPIEED (281 aa). The PKS/mFAS DH domain occupies 971–1254; sequence HEILGSRTVE…FSPIEEDSSD (284 aa). Catalysis depends on His-1003, which acts as the Proton acceptor; for dehydratase activity. Positions 1109-1254 are C-terminal hotdog fold; the sequence is DHPRSVPSPY…FSPIEEDSSD (146 aa). Asp-1169 functions as the Proton donor; for dehydratase activity in the catalytic mechanism. Positions 1419–1597 are methyltransferase (CMet) domain; the sequence is DFFTAAGHSK…FSGCDATVYD (179 aa). The enoyl reductase (ER) (ER) domain stretch occupies residues 1806 to 2114; that stretch reads GLLQTLRWVP…KGSHIGKIVV (309 aa). The tract at residues 2139 to 2312 is ketoreductase (KR) domain; the sequence is GYLLVGGLGG…ASVVDIGVMG (174 aa). In terms of domain architecture, Carrier spans 2413–2505; that stretch reads MSSVETDSSI…ALGLLTIEGL (93 aa). Residue Ser-2464 is modified to O-(pantetheine 4'-phosphoryl)serine.

Its pathway is mycotoxin biosynthesis. Its function is as follows. Highly reducing polyketide synthase; part of the gene cluster that mediates the biosynthesis of pneumocandins, lipohexapeptides of the echinocandin family that prevent fungal cell wall formation by non-competitive inhibition of beta-1,3-glucan synthase. The 10,12-dimethylmyristoyl side chain is synthesized by the reducing polyketide synthase gloL/GLPKS4. The thioesterase gloN/GLHYD exclusively interacts with gloL/GLPKS4 to maintain turnover of the polyketide side chain. The 10R,12S-dimethylmyristic acid is then transferred to the first thiolation domain of the nonribosomal peptide synthetase gloA/GLNRPS4 by the acyl-AMP ligase gloD/GLligase, followed by its acylation to L-ornithine to trigger elongation of the cyclic hexapeptide. L-ornithine, 4R-hydroxyl-L-proline (generated from L-proline by the dioxygenase gloF/GLOXY2), 3S-hydroxyl-L-homotyrosine (generated by gloG/GLHtyB, gloH/GLHtyA, gloI/GLHtyC, gloJ/GLHtyD and hydroxylated at C-3 by the dioxygenase gloM/GLOXY1), 3R-hydroxyl-L-glutamine (generated from L-glutamine probably by the dioxygenase gloE/GLOXY3) and 3S-hydroxyl-L-proline (generated from L-proline by the dioxygenase gloF/GLOXY2 to yield pneumocandin B0), or 3S-hydroxyl-4S-methyl-L-proline (generated from L-leucine by the dioxygenase gloC/GLOXY4 to yield pneumocandin A0) are sequentially added to the growing chain. The last C domain of gloA/GLNRPS4 is proposed to be responsible for cyclization by condensation to form the peptide bond between L-ornithine and 3S-hydroxyl-4S-methyl-L-proline (for pneumocandin A0) or 3S-hydroxyl-L-proline (for pneumocandin B0). Finally, the subsequent C-4 hydroxylation of 3S-hydroxyl-L-homotyrosine and L-ornithine dihydroxylation at C-4 and C-5 are performed by the cytochrome P450 monooxygenases gloP/GLP450-1 and gloO/GLP450-2, respectively. This chain is Highly reducing polyketide synthase gloL, found in Glarea lozoyensis (strain ATCC 20868 / MF5171).